We begin with the raw amino-acid sequence, 442 residues long: Histidine--tRNA ligase (442 aa).

This sequence belongs to the class-II aminoacyl-tRNA synthetase family. In terms of assembly, homodimer.

Its subcellular location is the cytoplasm. The enzyme catalyses tRNA(His) + L-histidine + ATP = L-histidyl-tRNA(His) + AMP + diphosphate + H(+). This chain is Histidine--tRNA ligase (hisS), found in Helicobacter pylori (strain J99 / ATCC 700824) (Campylobacter pylori J99).